The chain runs to 161 residues: Phosphopantetheine adenylyltransferase (161 aa).

Thr-10 lines the substrate pocket. Residues 10 to 11 (TF) and His-18 contribute to the ATP site. 3 residues coordinate substrate: Lys-42, Met-74, and Arg-88. Residues 89-91 (GLR), Glu-99, and 124-130 (WSFISSS) contribute to the ATP site.

The protein belongs to the bacterial CoaD family. As to quaternary structure, homohexamer. Mg(2+) is required as a cofactor.

The protein localises to the cytoplasm. The enzyme catalyses (R)-4'-phosphopantetheine + ATP + H(+) = 3'-dephospho-CoA + diphosphate. It functions in the pathway cofactor biosynthesis; coenzyme A biosynthesis; CoA from (R)-pantothenate: step 4/5. Reversibly transfers an adenylyl group from ATP to 4'-phosphopantetheine, yielding dephospho-CoA (dPCoA) and pyrophosphate. In Serratia proteamaculans (strain 568), this protein is Phosphopantetheine adenylyltransferase.